Reading from the N-terminus, the 345-residue chain is Putative pyridoxal reductase (345 aa).

The Proton donor role is filled by Tyr60.

It belongs to the aldo/keto reductase family.

The protein resides in the cytoplasm. The protein localises to the nucleus. It catalyses the reaction pyridoxine + NADP(+) = pyridoxal + NADPH + H(+). The protein operates within cofactor degradation; B6 vitamer degradation; pyridoxal from pyridoxine (dehydrogenase route): step 1/1. Its function is as follows. Catalyzes the reduction of pyridoxal (PL) with NADPH and oxidation of pyridoxine (PN) with NADP(+). This chain is Putative pyridoxal reductase, found in Saccharomyces cerevisiae (strain ATCC 204508 / S288c) (Baker's yeast).